The following is a 269-amino-acid chain: 5'-nucleotidase SurE (269 aa).

Asp-11, Asp-12, Ser-42, and Asn-90 together coordinate a divalent metal cation.

The protein belongs to the SurE nucleotidase family. A divalent metal cation is required as a cofactor.

It is found in the cytoplasm. The catalysed reaction is a ribonucleoside 5'-phosphate + H2O = a ribonucleoside + phosphate. Nucleotidase that shows phosphatase activity on nucleoside 5'-monophosphates. This is 5'-nucleotidase SurE from Haloarcula marismortui (strain ATCC 43049 / DSM 3752 / JCM 8966 / VKM B-1809) (Halobacterium marismortui).